We begin with the raw amino-acid sequence, 724 residues long: Probable serine/threonine-protein kinase KKQ8 (724 aa).

2 disordered regions span residues 1-81 and 93-188; these read MVMQ…RQRS and HPFR…KDIL. Phosphoserine is present on Ser19. The segment covering 45–54 has biased composition (low complexity); it reads PYRSSSTSPK. Polar residues predominate over residues 95 to 106; the sequence is FRQTGSGASNSP. Over residues 143-162 the composition is skewed to low complexity; that stretch reads RSSSVSSCDSSNGTTSSSDS. Ser232, Ser238, and Ser241 each carry phosphoserine. A disordered region spans residues 329-355; it reads SQTNHEKRTGQSPNDSNRSSPTQGRED. Over residues 338 to 351 the composition is skewed to polar residues; it reads GQSPNDSNRSSPTQ. The 301-residue stretch at 412 to 712 folds into the Protein kinase domain; the sequence is GHPVGLVGAG…VGKLLDMQWM (301 aa). ATP-binding positions include 418–426 and Lys455; that span reads VGAGAYGEV. Residue Asp563 is the Proton acceptor of the active site.

It belongs to the protein kinase superfamily. CAMK Ser/Thr protein kinase family. NPR/HAL subfamily. HAL5 sub-subfamily.

The protein localises to the cytoplasm. The catalysed reaction is L-seryl-[protein] + ATP = O-phospho-L-seryl-[protein] + ADP + H(+). It catalyses the reaction L-threonyl-[protein] + ATP = O-phospho-L-threonyl-[protein] + ADP + H(+). The polypeptide is Probable serine/threonine-protein kinase KKQ8 (KKQ8) (Saccharomyces cerevisiae (strain ATCC 204508 / S288c) (Baker's yeast)).